A 652-amino-acid chain; its full sequence is Pesticidal crystal protein Cry3Bb (652 aa).

Basic and acidic residues predominate over residues 1 to 12 (MNPNNRSEHDTI). Disordered regions lie at residues 1–33 (MNPNNRSEHDTIKVTPNSELQTNHNQYPLADNP) and 433–465 (KNETSTQTYDSKRNNGHVSAQDSIDQLPPETTD). A compositionally biased stretch (polar residues) spans 14-33 (VTPNSELQTNHNQYPLADNP).

It belongs to the delta endotoxin family. As to quaternary structure, monomer.

In terms of biological role, promotes colloidosmotic lysis by binding to the midgut epithelial cells of Coleoptera. Has moderate level of toxicity to southern corn rootworm. This is Pesticidal crystal protein Cry3Bb (cry3Bb) from Bacillus thuringiensis.